Here is a 271-residue protein sequence, read N- to C-terminus: Small ribosomal subunit protein uS2 (271 aa).

Positions Phe235 to Ile271 are disordered. The segment covering Ser262–Ile271 has biased composition (polar residues).

This sequence belongs to the universal ribosomal protein uS2 family.

This Onion yellows phytoplasma (strain OY-M) protein is Small ribosomal subunit protein uS2.